The chain runs to 711 residues: Polyribonucleotide nucleotidyltransferase (711 aa).

Asp494 and Asp500 together coordinate Mg(2+). A KH domain is found at 560–620 (PKIEIFGVDP…INVENAKSDI (61 aa)). One can recognise an S1 motif domain in the interval 651-710 (GEEFDGVVKKIMDFGAFISLKDGIDGLLHVSKIKTQLSEGDTLRVKVEEIKRGKISLELC).

This sequence belongs to the polyribonucleotide nucleotidyltransferase family. The cofactor is Mg(2+).

It is found in the cytoplasm. It carries out the reaction RNA(n+1) + phosphate = RNA(n) + a ribonucleoside 5'-diphosphate. Its function is as follows. Involved in mRNA degradation. Catalyzes the phosphorolysis of single-stranded polyribonucleotides processively in the 3'- to 5'-direction. The chain is Polyribonucleotide nucleotidyltransferase from Campylobacter hominis (strain ATCC BAA-381 / DSM 21671 / CCUG 45161 / LMG 19568 / NCTC 13146 / CH001A).